A 799-amino-acid chain; its full sequence is Elongation factor G, mitochondrial (799 aa).

The N-terminal 34 residues, 1–34, are a transit peptide targeting the mitochondrion; the sequence is MRCPSLTRLPYRAVSGLPRSVVRLQSQNFLTRRC. Residues 97–384 enclose the tr-type G domain; it reads SRVRNIGIAA…GVVDYLPNPA (288 aa). Residues 106-113, 182-186, and 236-239 each bind GTP; these read AHIDSGKT, DTPGH, and NKMD.

The protein belongs to the TRAFAC class translation factor GTPase superfamily. Classic translation factor GTPase family. EF-G/EF-2 subfamily.

The protein localises to the mitochondrion. It functions in the pathway protein biosynthesis; polypeptide chain elongation. Its function is as follows. Mitochondrial GTPase that catalyzes the GTP-dependent ribosomal translocation step during translation elongation. During this step, the ribosome changes from the pre-translocational (PRE) to the post-translocational (POST) state as the newly formed A-site-bound peptidyl-tRNA and P-site-bound deacylated tRNA move to the P and E sites, respectively. Catalyzes the coordinated movement of the two tRNA molecules, the mRNA and conformational changes in the ribosome. The chain is Elongation factor G, mitochondrial (mef1) from Aspergillus flavus (strain ATCC 200026 / FGSC A1120 / IAM 13836 / NRRL 3357 / JCM 12722 / SRRC 167).